We begin with the raw amino-acid sequence, 863 residues long: Bifunctional uridylyltransferase/uridylyl-removing enzyme (863 aa).

The tract at residues 1-328 (MLFPLSLSSP…SSNQATVIEQ (328 aa)) is uridylyltransferase. Residues 329–687 (LDDDFQLINQ…ISNRFSLGGT (359 aa)) form a uridylyl-removing region. The HD domain maps to 446-568 (VDEHTLRVML…VQNQVRLDYL (123 aa)). 2 consecutive ACT domains span residues 688–772 (EVFI…PNRQ) and 794–863 (EMEL…RNIG).

The protein belongs to the GlnD family. Mg(2+) is required as a cofactor.

It carries out the reaction [protein-PII]-L-tyrosine + UTP = [protein-PII]-uridylyl-L-tyrosine + diphosphate. It catalyses the reaction [protein-PII]-uridylyl-L-tyrosine + H2O = [protein-PII]-L-tyrosine + UMP + H(+). Uridylyltransferase (UTase) activity is inhibited by glutamine, while glutamine activates uridylyl-removing (UR) activity. In terms of biological role, modifies, by uridylylation and deuridylylation, the PII regulatory proteins (GlnB and homologs), in response to the nitrogen status of the cell that GlnD senses through the glutamine level. Under low glutamine levels, catalyzes the conversion of the PII proteins and UTP to PII-UMP and PPi, while under higher glutamine levels, GlnD hydrolyzes PII-UMP to PII and UMP (deuridylylation). Thus, controls uridylylation state and activity of the PII proteins, and plays an important role in the regulation of nitrogen assimilation and metabolism. The protein is Bifunctional uridylyltransferase/uridylyl-removing enzyme of Haemophilus influenzae (strain PittEE).